Here is a 721-residue protein sequence, read N- to C-terminus: Polyribonucleotide nucleotidyltransferase (721 aa).

Positions 490 and 496 each coordinate Mg(2+). The region spanning 557-623 is the KH domain; sequence PRIISIKINP…RIAGLTKEAK (67 aa). Positions 625–693 constitute an S1 motif domain; the sequence is GEEYEGTVVK…DRGKIDLIRP (69 aa). The interval 693–721 is disordered; that stretch reads PELEGKIAPREPRAPRGGGDRGPRPPRRD.

This sequence belongs to the polyribonucleotide nucleotidyltransferase family. Mg(2+) serves as cofactor.

It localises to the cytoplasm. It carries out the reaction RNA(n+1) + phosphate = RNA(n) + a ribonucleoside 5'-diphosphate. Its function is as follows. Involved in mRNA degradation. Catalyzes the phosphorolysis of single-stranded polyribonucleotides processively in the 3'- to 5'-direction. The polypeptide is Polyribonucleotide nucleotidyltransferase (Deinococcus deserti (strain DSM 17065 / CIP 109153 / LMG 22923 / VCD115)).